Consider the following 670-residue polypeptide: Probable urocanate hydratase (670 aa).

Residues 126 to 127 (GG), Gln204, 250 to 252 (GMS), Glu270, 316 to 317 (NV), 338 to 342 (QTSLH), 349 to 350 (FY), Tyr398, and Gly590 contribute to the NAD(+) site.

The protein belongs to the urocanase family. NAD(+) is required as a cofactor.

The catalysed reaction is 4-imidazolone-5-propanoate = trans-urocanate + H2O. It participates in amino-acid degradation; L-histidine degradation into L-glutamate; N-formimidoyl-L-glutamate from L-histidine: step 2/3. This Caenorhabditis elegans protein is Probable urocanate hydratase.